The following is a 1220-amino-acid chain: Plasma membrane calcium-transporting ATPase 1 (1220 aa).

The residue at position 2 (Gly-2) is an N-acetylglycine. At Gly-2–Ala-105 the chain is on the cytoplasmic side. Residues Ser-8 and Ser-17 each carry the phosphoserine modification. A helical membrane pass occupies residues Leu-106–Phe-126. Topologically, residues Tyr-127–Ile-154 are extracellular. The helical transmembrane segment at Glu-155 to Trp-175 threads the bilayer. The Cytoplasmic segment spans residues Ser-176 to Leu-366. The segment at Glu-297 to Lys-356 is disordered. 2 stretches are compositionally biased toward basic and acidic residues: residues Lys-312–Ala-325 and Lys-337–Lys-356. A Phosphoserine modification is found at Ser-338. A helical transmembrane segment spans residues Thr-367–Ile-386. The Extracellular portion of the chain corresponds to Ile-387–Lys-418. The helical transmembrane segment at Phe-419–Val-439 threads the bilayer. Topologically, residues Thr-440 to Phe-855 are cytoplasmic. Asp-475 acts as the 4-aspartylphosphate intermediate in catalysis. The Mg(2+) site is built by Asp-475, Thr-477, Asp-797, and Asp-801. Residues Leu-856–Ile-876 form a helical membrane-spanning segment. Residues Thr-877 to Leu-882 are Extracellular-facing. The chain crosses the membrane as a helical span at residues Lys-883–Ala-903. Residues Thr-904–Thr-927 lie on the Cytoplasmic side of the membrane. The chain crosses the membrane as a helical span at residues Met-928–Phe-948. Residues Ala-949–His-971 lie on the Extracellular side of the membrane. The chain crosses the membrane as a helical span at residues Tyr-972–Arg-991. The Cytoplasmic portion of the chain corresponds to Lys-992–Asn-1005. Residues Asn-1006 to Gly-1027 traverse the membrane as a helical segment. The Extracellular portion of the chain corresponds to Gly-1028–Glu-1039. Residues Gln-1040–Thr-1060 traverse the membrane as a helical segment. At Ile-1061–Leu-1220 the chain is on the cytoplasmic side. The tract at residues Leu-1100 to Gln-1117 is calmodulin-binding subdomain A. Thr-1116 carries the phosphothreonine; by PKC modification. The tract at residues Ile-1118–Ser-1127 is calmodulin-binding subdomain B. A required for basolateral membrane targeting region spans residues Ile-1118–Leu-1220. Residues Ser-1140 and Ser-1155 each carry the phosphoserine modification. A disordered region spans residues Pro-1160–Leu-1220. Thr-1165 is modified (phosphothreonine). Ser-1178 and Ser-1182 each carry phosphoserine. Over residues Met-1200 to Leu-1220 the composition is skewed to polar residues.

The protein belongs to the cation transport ATPase (P-type) (TC 3.A.3) family. Type IIB subfamily. In terms of assembly, monomer. Dimer. Oligomer. Calmodulin binding. Interacts with PDZD11. Interacts with SLC35G1 and STIM1. Interacts with YWHAE; interacts with the monomeric and dimeric forms of the YWHAE but prefer the monomer form; this interaction inhibits calcium-transporting ATPase activity. Interacts with NPTN; this interaction stabilizes ATP2B1 and increases ATPase activity; this interaction controls T cell calcium homeostasis following T cell activation. Interacts with EPB41; regulates small intestinal calcium absorption through regulation of membrane expression of ATP2B1.

Its subcellular location is the cell membrane. It localises to the basolateral cell membrane. The protein resides in the synapse. It is found in the presynaptic cell membrane. The protein localises to the cytoplasmic vesicle. Its subcellular location is the secretory vesicle. It localises to the synaptic vesicle membrane. It catalyses the reaction Ca(2+)(in) + ATP + H2O = Ca(2+)(out) + ADP + phosphate + H(+). Catalyzes the hydrolysis of ATP coupled with the transport of calcium from the cytoplasm to the extracellular space thereby maintaining intracellular calcium homeostasis. Plays a role in blood pressure regulation through regulation of intracellular calcium concentration and nitric oxide production leading to regulation of vascular smooth muscle cells vasoconstriction. Positively regulates bone mineralization through absorption of calcium from the intestine. Plays dual roles in osteoclast differentiation and survival by regulating RANKL-induced calcium oscillations in preosteoclasts and mediating calcium extrusion in mature osteoclasts. Regulates insulin sensitivity through calcium/calmodulin signaling pathway by regulating AKT1 activation and NOS3 activation in endothelial cells. May play a role in synaptic transmission by modulating calcium and proton dynamics at the synaptic vesicles. The sequence is that of Plasma membrane calcium-transporting ATPase 1 from Sus scrofa (Pig).